The sequence spans 876 residues: Valine--tRNA ligase (876 aa).

A 'HIGH' region motif is present at residues 44 to 54; it reads PNVTGKLHLGH. The short motif at 520 to 524 is the 'KMSKS' region element; the sequence is KMSKS. Lys523 contacts ATP. A coiled-coil region spans residues 805-876; the sequence is LEGLIDMDKE…VKARIEQLKA (72 aa).

This sequence belongs to the class-I aminoacyl-tRNA synthetase family. ValS type 1 subfamily. Monomer.

It is found in the cytoplasm. It catalyses the reaction tRNA(Val) + L-valine + ATP = L-valyl-tRNA(Val) + AMP + diphosphate. Its function is as follows. Catalyzes the attachment of valine to tRNA(Val). As ValRS can inadvertently accommodate and process structurally similar amino acids such as threonine, to avoid such errors, it has a 'posttransfer' editing activity that hydrolyzes mischarged Thr-tRNA(Val) in a tRNA-dependent manner. The chain is Valine--tRNA ligase from Staphylococcus aureus (strain bovine RF122 / ET3-1).